Consider the following 346-residue polypeptide: Biotin synthase (346 aa).

Residues 38–256 enclose the Radical SAM core domain; sequence RQVQVSTLLS…IAVARIMMPT (219 aa). [4Fe-4S] cluster is bound by residues Cys-53, Cys-57, and Cys-60. [2Fe-2S] cluster contacts are provided by Cys-97, Cys-128, Cys-188, and Arg-260.

The protein belongs to the radical SAM superfamily. Biotin synthase family. Homodimer. The cofactor is [4Fe-4S] cluster. [2Fe-2S] cluster is required as a cofactor.

The catalysed reaction is (4R,5S)-dethiobiotin + (sulfur carrier)-SH + 2 reduced [2Fe-2S]-[ferredoxin] + 2 S-adenosyl-L-methionine = (sulfur carrier)-H + biotin + 2 5'-deoxyadenosine + 2 L-methionine + 2 oxidized [2Fe-2S]-[ferredoxin]. It participates in cofactor biosynthesis; biotin biosynthesis; biotin from 7,8-diaminononanoate: step 2/2. Catalyzes the conversion of dethiobiotin (DTB) to biotin by the insertion of a sulfur atom into dethiobiotin via a radical-based mechanism. This is Biotin synthase from Escherichia coli O6:H1 (strain CFT073 / ATCC 700928 / UPEC).